Consider the following 312-residue polypeptide: 2,3-dihydroxyphenylpropionate/2,3-dihydroxicinnamic acid 1,2-dioxygenase (312 aa).

His-115 functions as the Proton donor in the catalytic mechanism. The active-site Proton acceptor is the His-179.

It belongs to the LigB/MhpB extradiol dioxygenase family. In terms of assembly, homotetramer. It depends on Fe(2+) as a cofactor.

It catalyses the reaction 3-(2,3-dihydroxyphenyl)propanoate + O2 = (2Z,4E)-2-hydroxy-6-oxonona-2,4-dienedioate + H(+). The enzyme catalyses (2E)-3-(2,3-dihydroxyphenyl)prop-2-enoate + O2 = (2Z,4E,7E)-2-hydroxy-6-oxonona-2,4,7-trienedioate + H(+). It functions in the pathway aromatic compound metabolism; 3-phenylpropanoate degradation. Functionally, catalyzes the non-heme iron(II)-dependent oxidative cleavage of 2,3-dihydroxyphenylpropionic acid and 2,3-dihydroxicinnamic acid into 2-hydroxy-6-ketononadienedioate and 2-hydroxy-6-ketononatrienedioate, respectively. This is 2,3-dihydroxyphenylpropionate/2,3-dihydroxicinnamic acid 1,2-dioxygenase from Mycolicibacterium paratuberculosis (strain ATCC BAA-968 / K-10) (Mycobacterium paratuberculosis).